Consider the following 184-residue polypeptide: J-type co-chaperone JAC1, mitochondrial (184 aa).

A mitochondrion-targeting transit peptide spans 1–10 (MLKYLVQRRF). Residues 13-82 (TFYELFPKTF…LRRSQYMLKL (70 aa)) form the J domain. The HSP70 binding motif lies at 48 to 50 (HPD). The tract at residues 71–184 (DPLRRSQYML…APGKQLEMNH (114 aa)) is interaction with ISU1.

Belongs to the HscB family. In terms of assembly, interacts with ISU1 and SSQ1.

It is found in the mitochondrion matrix. In terms of biological role, co-chaperone required for the assembly of iron-sulfur (Fe/S) clusters in mitochondria. Stimulates the ATPase activity of its specialized Hsp70 chaperone partner SSQ1, to mediate the transfer of iron-sulfur clusters from ISU1 to GRX5. Binds to the substrate protein ISU1 and targets it to SSQ1. The sequence is that of J-type co-chaperone JAC1, mitochondrial from Saccharomyces cerevisiae (strain ATCC 204508 / S288c) (Baker's yeast).